We begin with the raw amino-acid sequence, 482 residues long: Long chain base biosynthesis protein 1 (482 aa).

A helical membrane pass occupies residues 32 to 52; the sequence is VPIRGHFFVEGLLGVVIIILL.

This sequence belongs to the class-II pyridoxal-phosphate-dependent aminotransferase family. Heterodimer with LCB2 (LCB2a or LCB2b). Component of the serine palmitoyltransferase (SPT) complex, composed of LCB1 and LCB2 (LCB2a or LCB2b). Pyridoxal 5'-phosphate is required as a cofactor. In terms of tissue distribution, ubiquitous.

The protein localises to the endoplasmic reticulum membrane. The catalysed reaction is L-serine + hexadecanoyl-CoA + H(+) = 3-oxosphinganine + CO2 + CoA. The protein operates within lipid metabolism; sphingolipid metabolism. Its function is as follows. Component of serine palmitoyltransferase (SPT), which catalyzes the committed step in the synthesis of sphingolipids, the condensation of serine with palmitoyl CoA to form the long chain base 3-ketosphinganine. The heterodimer formed with LCB2 constitutes the catalytic core. Involved in the regulation of the programmed cell death (PCD) signaling pathway. Plays an important role during male gametogenesis and embryogenesis. This is Long chain base biosynthesis protein 1 (LCB1) from Arabidopsis thaliana (Mouse-ear cress).